Here is a 385-residue protein sequence, read N- to C-terminus: Cytochrome b (385 aa).

The next 4 membrane-spanning stretches (helical) occupy residues 32–52, 76–98, 113–133, and 179–199; these read FGSL…TLAM, WLIR…LHIG, AWIL…LGYV, and FFAL…MHLI. Residues His82 and His96 each coordinate heme b. Heme b contacts are provided by His183 and His197. His202 serves as a coordination point for a ubiquinone. Transmembrane regions (helical) follow at residues 226–246, 290–310, 322–342, and 349–369; these read YLFK…IFVF, LLGV…PKTD, LSKI…QLGA, and FIEF…IIMP.

The protein belongs to the cytochrome b family. Fungal cytochrome b-c1 complex contains 10 subunits; 3 respiratory subunits, 2 core proteins and 5 low-molecular weight proteins. Cytochrome b-c1 complex is a homodimer. Heme b is required as a cofactor.

The protein localises to the mitochondrion inner membrane. Its function is as follows. Component of the ubiquinol-cytochrome c reductase complex (complex III or cytochrome b-c1 complex) that is part of the mitochondrial respiratory chain. The b-c1 complex mediates electron transfer from ubiquinol to cytochrome c. Contributes to the generation of a proton gradient across the mitochondrial membrane that is then used for ATP synthesis. This is Cytochrome b (cob) from Akanthomyces muscarius (Entomopathogenic fungus).